A 432-amino-acid polypeptide reads, in one-letter code: MSFTIETTQGLERRVQITVPADTVEGAVREELKRVAKTARVDGFRKGKVPPHIIEKRFGASVRHDVLGDVLQSHFFNVVMEQKVNLAGRPAFAVEQFEAGKDLVFTATFEVYPEVALQGLDQIKVEKPVVEISEADIDKMIDVLRKQQATWAETAEAASAEDRVVIDFVGSVDGEVFEGGKAEDFTLFMGQGRMIPGFEEGIVGHKAGEQFDIDVTFPEEYHAENLKGKAAKFAITLKKVEVMVLPELTDEFVAKFGPNTKTVDDLRNEIRKNMQRELKNALTAKVKGQVIDGLLAQNAIDVPASAVEQEIEVLRGQAAQRFGGNKEQAAQLPRELFEEQAKRRVQVGLLLAEVIASHELKVDEARAKTMIEEIASAYEQPAEVVEYYSKNKELMNNIRNVVLEEQAVDAVLAKAQVTEKAASFDDVMNPQA.

The 86-residue stretch at 161–246 (EDRVVIDFVG…LKKVEVMVLP (86 aa)) folds into the PPIase FKBP-type domain.

It belongs to the FKBP-type PPIase family. Tig subfamily.

The protein localises to the cytoplasm. It catalyses the reaction [protein]-peptidylproline (omega=180) = [protein]-peptidylproline (omega=0). Its function is as follows. Involved in protein export. Acts as a chaperone by maintaining the newly synthesized protein in an open conformation. Functions as a peptidyl-prolyl cis-trans isomerase. This is Trigger factor (tig) from Pasteurella multocida (strain Pm70).